The following is a 342-amino-acid chain: UDP-3-O-acylglucosamine N-acyltransferase (342 aa).

The active-site Proton acceptor is the histidine 243.

The protein belongs to the transferase hexapeptide repeat family. LpxD subfamily. As to quaternary structure, homotrimer.

The catalysed reaction is a UDP-3-O-[(3R)-3-hydroxyacyl]-alpha-D-glucosamine + a (3R)-hydroxyacyl-[ACP] = a UDP-2-N,3-O-bis[(3R)-3-hydroxyacyl]-alpha-D-glucosamine + holo-[ACP] + H(+). Its pathway is bacterial outer membrane biogenesis; LPS lipid A biosynthesis. In terms of biological role, catalyzes the N-acylation of UDP-3-O-acylglucosamine using 3-hydroxyacyl-ACP as the acyl donor. Is involved in the biosynthesis of lipid A, a phosphorylated glycolipid that anchors the lipopolysaccharide to the outer membrane of the cell. The protein is UDP-3-O-acylglucosamine N-acyltransferase of Coxiella burnetii (strain CbuK_Q154) (Coxiella burnetii (strain Q154)).